We begin with the raw amino-acid sequence, 29 residues long: Trypsin inhibitor 3 (29 aa).

3 cysteine pairs are disulfide-bonded: Cys3/Cys20, Cys10/Cys22, and Cys16/Cys28.

It belongs to the protease inhibitor I7 (squash-type serine protease inhibitor) family.

The protein resides in the secreted. In terms of biological role, strongly inhibits trypsin, weakly inhibits chymotrypsin. The sequence is that of Trypsin inhibitor 3 from Cyclanthera pedata (Achocha).